Here is a 328-residue protein sequence, read N- to C-terminus: Cytochrome c biogenesis protein CcsA (328 aa).

8 consecutive transmembrane segments (helical) span residues 15 to 35 (FLVL…PSVP), 37 to 57 (LQAL…ALLG), 68 to 88 (ISNL…AHLI), 97 to 117 (LVGV…ALTL), 142 to 162 (VMML…AFLF), 236 to 256 (IIGL…VWAN), 271 to 291 (WALI…TKGW), and 297 to 317 (AILA…VNLL).

The protein belongs to the CcmF/CycK/Ccl1/NrfE/CcsA family. May interact with ccs1.

The protein resides in the cellular thylakoid membrane. Required during biogenesis of c-type cytochromes (cytochrome c6 and cytochrome f) at the step of heme attachment. This is Cytochrome c biogenesis protein CcsA from Gloeothece citriformis (strain PCC 7424) (Cyanothece sp. (strain PCC 7424)).